Reading from the N-terminus, the 189-residue chain is UPF0688 protein C1orf174 homolog (189 aa).

A disordered region spans residues 53–137; sequence QMAGDGGEAK…TTDPSVFFDE (85 aa). 2 stretches are compositionally biased toward basic and acidic residues: residues 59–73 and 93–103; these read GEAK…HGEV and APGERRGKENS.

Belongs to the UPF0688 family.

The protein localises to the nucleus. This is UPF0688 protein C1orf174 homolog from Danio rerio (Zebrafish).